Here is a 334-residue protein sequence, read N- to C-terminus: Guanine nucleotide-binding protein subunit beta-like protein (334 aa).

WD repeat units lie at residues 14–55 (GHKD…DSEF), 65–104 (GHSK…SILL), 106–145 (GHGR…VLKM), 152–192 (MHRG…HLQT), 215–256 (DESK…QSFD), and 257–294 (AIVP…VIAS).

The protein belongs to the WD repeat G protein beta family.

The chain is Guanine nucleotide-binding protein subunit beta-like protein from Encephalitozoon cuniculi (strain GB-M1) (Microsporidian parasite).